The sequence spans 731 residues: Alpha-1,4-glucan:maltose-1-phosphate maltosyltransferase (731 aa).

Residues 1 to 10 (MEAQHNETEA) are compositionally biased toward basic and acidic residues. The tract at residues 1–31 (MEAQHNETEAAGKPAAKKTTRTRKPRASKQA) is disordered. Residues 15–27 (AAKKTTRTRKPRA) show a composition bias toward basic residues. Positions 321, 381, and 416 each coordinate alpha-maltose 1-phosphate. Aspartate 451 serves as the catalytic Nucleophile. Residue asparagine 452 coordinates alpha-maltose 1-phosphate. Glutamate 480 serves as the catalytic Proton donor. Alpha-maltose 1-phosphate is bound at residue 590–591 (KF).

It belongs to the glycosyl hydrolase 13 family. GlgE subfamily. In terms of assembly, homodimer.

The catalysed reaction is alpha-maltose 1-phosphate + [(1-&gt;4)-alpha-D-glucosyl](n) = [(1-&gt;4)-alpha-D-glucosyl](n+2) + phosphate. In terms of biological role, maltosyltransferase that uses maltose 1-phosphate (M1P) as the sugar donor to elongate linear or branched alpha-(1-&gt;4)-glucans. Is involved in a branched alpha-glucan biosynthetic pathway from trehalose, together with TreS, Mak and GlgB. This chain is Alpha-1,4-glucan:maltose-1-phosphate maltosyltransferase, found in Bifidobacterium animalis subsp. lactis (strain Bl-04 / DGCC2908 / RB 4825 / SD5219).